The sequence spans 141 residues: Hemoglobin subunit alpha (141 aa).

The 141-residue stretch at 1-141 (VLSSDDKCNV…VSSVLTSKYR (141 aa)) folds into the Globin domain. Residue histidine 58 participates in O2 binding. Residue histidine 87 participates in heme b binding.

It belongs to the globin family. Heterotetramer of two alpha chains and two beta chains. In terms of tissue distribution, red blood cells.

In terms of biological role, involved in oxygen transport from the lung to the various peripheral tissues. Has antimicrobial activity against B.subtilis ATCC 6633. Has antioxidant activity. This Crocodylus siamensis (Siamese crocodile) protein is Hemoglobin subunit alpha.